The sequence spans 449 residues: Keratin, type I cytoskeletal 27 (449 aa).

Residues 1–73 (MSVRFSSASR…VNEHGLLSGN (73 aa)) form a head region. The coil 1A stretch occupies residues 74 to 109 (EKVTMQNLNDRLASYLENVQALEEANADLEQKIKDW). One can recognise an IF rod domain in the interval 74 to 389 (EKVTMQNLND…LLIGGDEGSC (316 aa)). Positions 110 to 131 (YEKFGPGSCRGLDHDYSRYFPI) are linker 1. The segment at 132–223 (IDDLRTQIIS…KNHEEEMQAL (92 aa)) is coil 1B. The linker 12 stretch occupies residues 224 to 246 (QCAAGGNVNVEMNAAPGVDLTVL). Residues 247–385 (LNNMRAEYEA…ETYCLLIGGD (139 aa)) form a coil 2 region. The tail stretch occupies residues 386–449 (EGSCVKSKGQ…NNKNEQRIPS (64 aa)). Residues 425 to 449 (LSSRVHTLEEKSTKVNNKNEQRIPS) form a disordered region. The segment covering 430–449 (HTLEEKSTKVNNKNEQRIPS) has biased composition (basic and acidic residues).

It belongs to the intermediate filament family. In terms of assembly, heterotetramer of two type I and two type II keratins. Interacts with KRT6A to form filaments.

The protein localises to the cytoplasm. Essential for the proper assembly of type I and type II keratin protein complexes and formation of keratin intermediate filaments in the inner root sheath (irs). The sequence is that of Keratin, type I cytoskeletal 27 from Rattus norvegicus (Rat).